Reading from the N-terminus, the 277-residue chain is Prohibitin-3, mitochondrial (277 aa).

G2 carries the N-acetylglycine modification. Over 2–6 (GSQQA) the chain is Mitochondrial matrix. Residues 7–28 (AVSFLSNLAKAAFGLGTAATVL) traverse the membrane as a helical; Signal-anchor for type II membrane protein segment. Residues 29–277 (NTSLFTVDGG…GQSMLFALNR (249 aa)) are Mitochondrial intermembrane-facing.

This sequence belongs to the prohibitin family. As to quaternary structure, component of a prohibitin multimeric complex in mitochondrial membranes. Mostly expressed in proliferative tissues, including vasculature, shoot and root apical tissues. Expressed in roots, stems, leaves and flowers (at protein level).

The protein localises to the cell membrane. The protein resides in the mitochondrion inner membrane. It is found in the nucleus. It localises to the cytoplasm. Functionally, prohibitin probably acts as a holdase/unfoldase for the stabilization of newly synthesized mitochondrial proteins. Necessary for mitochondrial and cell metabolism and biogenesis. Required to regulate the ethylene-mediated signaling; involved in growth maintenance in the presence of ethylene. Functions in nitric oxide (NO)-mediated responses and in hydrogen peroxide-induced NO accumulation. This chain is Prohibitin-3, mitochondrial (PHB3), found in Arabidopsis thaliana (Mouse-ear cress).